We begin with the raw amino-acid sequence, 408 residues long: Imidazolonepropionase (408 aa).

Fe(3+)-binding residues include His-73 and His-75. Residues His-73 and His-75 each coordinate Zn(2+). 3 residues coordinate 4-imidazolone-5-propanoate: Arg-82, Tyr-145, and His-178. Residue Tyr-145 participates in N-formimidoyl-L-glutamate binding. A Fe(3+)-binding site is contributed by His-243. His-243 contributes to the Zn(2+) binding site. Residue Gln-246 coordinates 4-imidazolone-5-propanoate. Asp-318 contacts Fe(3+). A Zn(2+)-binding site is contributed by Asp-318. 2 residues coordinate N-formimidoyl-L-glutamate: Asn-320 and Gly-322. Residue Ser-323 participates in 4-imidazolone-5-propanoate binding.

This sequence belongs to the metallo-dependent hydrolases superfamily. HutI family. Zn(2+) is required as a cofactor. Fe(3+) serves as cofactor.

The protein resides in the cytoplasm. The catalysed reaction is 4-imidazolone-5-propanoate + H2O = N-formimidoyl-L-glutamate. It participates in amino-acid degradation; L-histidine degradation into L-glutamate; N-formimidoyl-L-glutamate from L-histidine: step 3/3. Catalyzes the hydrolytic cleavage of the carbon-nitrogen bond in imidazolone-5-propanoate to yield N-formimidoyl-L-glutamate. It is the third step in the universal histidine degradation pathway. In Shewanella sp. (strain MR-4), this protein is Imidazolonepropionase.